Consider the following 399-residue polypeptide: 3-dehydroquinate synthase (399 aa).

This sequence belongs to the archaeal-type DHQ synthase family.

It carries out the reaction 2-amino-2,3,7-trideoxy-D-lyxo-hept-6-ulosonate + NAD(+) + H2O = 3-dehydroquinate + NH4(+) + NADH + H(+). In terms of biological role, catalyzes the oxidative deamination and cyclization of 2-amino-3,7-dideoxy-D-threo-hept-6-ulosonic acid (ADH) to yield 3-dehydroquinate (DHQ), which is fed into the canonical shikimic pathway of aromatic amino acid biosynthesis. The protein is 3-dehydroquinate synthase of Haloquadratum walsbyi (strain DSM 16790 / HBSQ001).